Here is a 777-residue protein sequence, read N- to C-terminus: Lon protease (777 aa).

In terms of domain architecture, Lon N-terminal spans 11-204 (IPVLPLRDVV…FLMAIMETEI (194 aa)). 356-363 (GPPGVGKT) contributes to the ATP binding site. One can recognise a Lon proteolytic domain in the interval 592–773 (LNQIGQVVGL…EEVLKIALEN (182 aa)). Catalysis depends on residues serine 679 and lysine 722.

Belongs to the peptidase S16 family. In terms of assembly, homohexamer. Organized in a ring with a central cavity.

Its subcellular location is the cytoplasm. It catalyses the reaction Hydrolysis of proteins in presence of ATP.. Functionally, ATP-dependent serine protease that mediates the selective degradation of mutant and abnormal proteins as well as certain short-lived regulatory proteins. Required for cellular homeostasis and for survival from DNA damage and developmental changes induced by stress. Degrades polypeptides processively to yield small peptide fragments that are 5 to 10 amino acids long. Binds to DNA in a double-stranded, site-specific manner. The sequence is that of Lon protease from Buchnera aphidicola subsp. Schizaphis graminum (strain Sg).